A 257-amino-acid polypeptide reads, in one-letter code: MLIFLSPAKSLDYKTPPHVATFTQPAYLKQSETLIKQLRKLSPADIANLMHLSDPLALLNFNRYAEWSLPFTPENAKQAVLAFDGDVYDGLAAKNLTADDLDFAQQQVRILSGLYGILKPLDLVQPYRLEMGTRFANKAGKDLYAFWGERLLEAINAELAGMSRPVVLNLASEEYFKAAVGRKINGEVIQPVFEDWKNGKYKIISFYAKRARGLMTRYAVVNRLSEPEGLKAFDYDGYAFVPEVSDDKSWVFRRRES.

Belongs to the UPF0246 family.

This is UPF0246 protein Daro_2893 from Dechloromonas aromatica (strain RCB).